The chain runs to 379 residues: CCN family member 1 (379 aa).

Residues 1–24 (MSSSTIKTLAVAVTLLHLTRLALS) form the signal peptide. Residues 25 to 94 (TCPAACHCPL…TALKGICRAQ (70 aa)) enclose the IGFBP N-terminal domain. Disulfide bonds link cysteine 26–cysteine 50, cysteine 30–cysteine 52, cysteine 32–cysteine 53, cysteine 39–cysteine 56, cysteine 64–cysteine 78, and cysteine 70–cysteine 91. One can recognise a VWFC domain in the interval 98 to 164 (RPCEYNSRIY…GQCCEEWVCD (67 aa)). Residue serine 184 is modified to Phosphoserine. The 46-residue stretch at 226 to 271 (KCIVQTTSWSQCSKSCGTGISTRVTNDNSECRLVKETRICEVRPCG) folds into the TSP type-1 domain. Residues 277–313 (SLKKGKKCSKTKKSPEPVRFTYAGCSSVKKYRPKYCG) form a heparin-binding region. Cystine bridges form between cysteine 284–cysteine 321, cysteine 301–cysteine 335, cysteine 312–cysteine 351, cysteine 315–cysteine 353, and cysteine 320–cysteine 357. Residues 284–358 (CSKTKKSPEP…QSCKCNYNCP (75 aa)) enclose the CTCK domain.

It belongs to the CCN family. In terms of assembly, interaction with integrins is heparin- and cell-type-dependent and promotes cell adhesion.

The protein localises to the secreted. Its function is as follows. Promotes cell proliferation, chemotaxis, angiogenesis and cell adhesion. Appears to play a role in wound healing by up-regulating, in skin fibroblasts, the expression of a number of genes involved in angiogenesis, inflammation and matrix remodeling including VEGA-A, VEGA-C, MMP1, MMP3, TIMP1, uPA, PAI-1 and integrins alpha-3 and alpha-5. CCN1-mediated gene regulation is dependent on heparin-binding. Down-regulates the expression of alpha-1 and alpha-2 subunits of collagen type-1. Promotes cell adhesion and adhesive signaling through integrin alpha-6/beta-1, cell migration through integrin alpha-1/beta-5 and cell proliferation through integrin alpha-v/beta-3. In Rattus norvegicus (Rat), this protein is CCN family member 1.